The following is a 312-amino-acid chain: Bifunctional pinoresinol-lariciresinol reductase (312 aa).

Residues 11-17 (GGTGYIG), Arg-36, and Lys-45 each bind NADP(+). The active-site Proton acceptor is the Lys-138. Arg-142 contacts NADP(+). Residue His-270 coordinates substrate.

This sequence belongs to the NmrA-type oxidoreductase family. Isoflavone reductase subfamily. In terms of assembly, dimer.

It catalyses the reaction (+)-lariciresinol + NADP(+) = (+)-pinoresinol + NADPH + H(+). The enzyme catalyses (-)-secoisolariciresinol + NADP(+) = (+)-lariciresinol + NADPH + H(+). Reductase involved in lignan biosynthesis. Catalyzes the enantioselective sequential conversion of (+)-pinoresinol into (+)-lariciresinol and of (+)-lariciresinol into (-)-secoisolariciresinol. Abstracts the 4R-hydride from the NADPH cofactor during catalysis. This is Bifunctional pinoresinol-lariciresinol reductase from Thuja plicata (Western red-cedar).